Consider the following 624-residue polypeptide: Atypical kinase COQ8B, mitochondrial (624 aa).

The interval 90–117 (EMPPDFSSKDGRGETSETPVGAATGTIK) is disordered. A helical membrane pass occupies residues 189 to 205 (LANFGGLAVGLGIGAIA). A KxGQ motif motif is present at residues 249–252 (KIGQ). The Protein kinase domain maps to 285-517 (MHKVLEEELG…ATVLKKSKDL (233 aa)). The AAAS motif signature appears at 310-313 (AAAS). Residues serine 313, lysine 331, and 418–421 (MELV) each bind ATP. Aspartate 461 acts as the Proton acceptor in catalysis. Asparagine 466 and aspartate 480 together coordinate ATP.

This sequence belongs to the protein kinase superfamily. ADCK protein kinase family. In terms of assembly, homodimer; homodimerizes via its transmembrane region. Interacts with the multi-subunit COQ enzyme complex.

It localises to the mitochondrion membrane. The protein localises to the cytoplasm. The protein resides in the cytosol. Its subcellular location is the cell membrane. The protein operates within cofactor biosynthesis; ubiquinone biosynthesis. Functionally, atypical kinase involved in the biosynthesis of coenzyme Q, also named ubiquinone, an essential lipid-soluble electron transporter for aerobic cellular respiration. Its substrate specificity is still unclear: may act as a protein kinase that mediates phosphorylation of COQ3. According to other reports, acts as a small molecule kinase, possibly a lipid kinase that phosphorylates a prenyl lipid in the ubiquinone biosynthesis pathway, as suggested by its ability to bind coenzyme Q lipid intermediates. However, the small molecule kinase activity was not confirmed by another publication. Required for podocyte migration. The polypeptide is Atypical kinase COQ8B, mitochondrial (Danio rerio (Zebrafish)).